A 155-amino-acid polypeptide reads, in one-letter code: Basic phospholipase A2 PC1 (155 aa).

The signal sequence occupies residues 1–21; the sequence is MYPAHLLVLLAVCVSLLGASA. Positions 22–27 are excised as a propeptide; the sequence is ISNRPR. 7 disulfide bridges follow: C38–C98, C54–C144, C56–C72, C71–C125, C78–C118, C87–C111, and C105–C116. Residues Y55, G57, and G59 each coordinate Ca(2+). The active site involves H75. D76 is a Ca(2+) binding site. Residue D119 is part of the active site.

The protein belongs to the phospholipase A2 family. Group I subfamily. D49 sub-subfamily. The cofactor is Ca(2+). Expressed by the venom gland.

It localises to the secreted. It carries out the reaction a 1,2-diacyl-sn-glycero-3-phosphocholine + H2O = a 1-acyl-sn-glycero-3-phosphocholine + a fatty acid + H(+). Functionally, snake venom phospholipase A2 (PLA2) that inhibits neuromuscular transmission by blocking acetylcholine release from the nerve termini. PLA2 catalyzes the calcium-dependent hydrolysis of the 2-acyl groups in 3-sn-phosphoglycerides. The sequence is that of Basic phospholipase A2 PC1 from Laticauda colubrina (Yellow-lipped sea krait).